Here is a 695-residue protein sequence, read N- to C-terminus: DNA ligase (695 aa).

NAD(+)-binding positions include 44–48 (DAEYD), 93–94 (SL), and glutamate 123. Lysine 125 serves as the catalytic N6-AMP-lysine intermediate. Residues arginine 146, glutamate 184, lysine 300, and lysine 324 each coordinate NAD(+). Positions 418, 421, 436, and 442 each coordinate Zn(2+). Residues 605 to 694 (SAAKPLAGIT…PDAARSMAQR (90 aa)) enclose the BRCT domain.

This sequence belongs to the NAD-dependent DNA ligase family. LigA subfamily. Mg(2+) serves as cofactor. The cofactor is Mn(2+).

The catalysed reaction is NAD(+) + (deoxyribonucleotide)n-3'-hydroxyl + 5'-phospho-(deoxyribonucleotide)m = (deoxyribonucleotide)n+m + AMP + beta-nicotinamide D-nucleotide.. DNA ligase that catalyzes the formation of phosphodiester linkages between 5'-phosphoryl and 3'-hydroxyl groups in double-stranded DNA using NAD as a coenzyme and as the energy source for the reaction. It is essential for DNA replication and repair of damaged DNA. The chain is DNA ligase from Acidothermus cellulolyticus (strain ATCC 43068 / DSM 8971 / 11B).